Here is a 37-residue protein sequence, read N- to C-terminus: M-oxotoxin-Ot2c (37 aa).

As to expression, expressed by the venom gland.

The protein resides in the secreted. Its function is as follows. Disrupts biological membranes, particularly those rich in phosphocholine. Has antimicrobial activity against Gram-negative bacterium E.coli, Gram-positive bacteria B.subtilis and S.aureus, and hemolytic activity against sheep, pig and guinea pig red blood cells. Has insecticidal activity against S.frugiperda ovarian cells by opening non-selective ion channels. Enhances the insecticidal activity of spider venom neurotoxic peptides. This Oxyopes takobius (Lynx spider) protein is M-oxotoxin-Ot2c.